Reading from the N-terminus, the 151-residue chain is Kinetoplast-associated protein 1 (151 aa).

The propeptide occupies 1–9 (MLRVSVRSL). Residues 13–151 (ASSKAGSKAA…KKGAAKKAHK (139 aa)) are disordered. Composition is skewed to low complexity over residues 15–49 (SKAG…VPPV), 70–91 (AAAA…TPAK), and 101–111 (SKPSAPKQAAG). Basic residues predominate over residues 112-151 (KMRKAAGKAQRKIKAAARKAAPKKMAKSFGKKGAAKKAHK).

It belongs to the KAP family. In terms of assembly, associates with the kinetoplast DNA network.

It localises to the mitochondrion matrix. Its subcellular location is the kinetoplast. In terms of biological role, histone H1-like DNA-binding protein involved in the organization and segregation of kinetoplast DNA (kDNA). The mitochondrial DNA of kinetoplastid protozoa consists of about 5,000 minicircles and 20 to 30 maxicircles. These circular DNAs are held together by catenation into a highly organized compact disk structure referred to as a kinetoplast DNA (kDNA) network. Binds preferentially to a specific fragment of minicircle DNA and is able to compact kDNA networks through DNA charge neutralization and condensation. In Crithidia fasciculata, this protein is Kinetoplast-associated protein 1 (KAP4).